A 198-amino-acid chain; its full sequence is Myb-related protein 340 (198 aa).

2 consecutive HTH myb-type domains span residues 10–62 and 63–117; these read DVEV…LNYL and RPDV…IQKH. 2 consecutive DNA-binding regions (H-T-H motif) follow at residues 38–62 and 90–113; these read WNTI…LNYL and WSKI…NRTR.

Expressed only in flowers.

The protein localises to the nucleus. Transcription factor. The chain is Myb-related protein 340 from Antirrhinum majus (Garden snapdragon).